The following is a 121-amino-acid chain: Large ribosomal subunit protein uL18 (121 aa).

Belongs to the universal ribosomal protein uL18 family. Part of the 50S ribosomal subunit; part of the 5S rRNA/L5/L18/L25 subcomplex. Contacts the 5S and 23S rRNAs.

In terms of biological role, this is one of the proteins that bind and probably mediate the attachment of the 5S RNA into the large ribosomal subunit, where it forms part of the central protuberance. The polypeptide is Large ribosomal subunit protein uL18 (Burkholderia mallei (strain NCTC 10247)).